The sequence spans 175 residues: ATP-dependent protease subunit HslV (175 aa).

The active site involves T5. Residues G160, D163, and T166 each coordinate Na(+).

This sequence belongs to the peptidase T1B family. HslV subfamily. A double ring-shaped homohexamer of HslV is capped on each side by a ring-shaped HslU homohexamer. The assembly of the HslU/HslV complex is dependent on binding of ATP.

The protein resides in the cytoplasm. It catalyses the reaction ATP-dependent cleavage of peptide bonds with broad specificity.. Allosterically activated by HslU binding. In terms of biological role, protease subunit of a proteasome-like degradation complex believed to be a general protein degrading machinery. This chain is ATP-dependent protease subunit HslV, found in Myxococcus xanthus.